The sequence spans 103 residues: CLAVATA3/ESR (CLE)-related protein 22 (103 aa).

The first 34 residues, 1-34 (MGNYYSRRKSRKHITTVALIILLLLLFLFLYAKA), serve as a signal peptide directing secretion. Residues 37–103 (SSPNIHHHST…FTGPNPLHNR (67 aa)) are disordered. The segment covering 41 to 50 (IHHHSTHGSL) has biased composition (basic residues). Polar residues predominate over residues 66 to 76 (NAASSRGSKYT). The residue at position 97 (P97) is a Hydroxyproline. P97 carries an O-linked (Ara...) hydroxyproline glycan.

The protein belongs to the CLV3/ESR signal peptide family. The O-glycosylation (arabinosylation) of the hydroxyproline Pro-97 enhances binding affinity of the CLE22p peptide for its receptor. In terms of tissue distribution, mostly expressed in stems and apex, and, to a lower extent, in seedlings, leaves, flowers and siliques.

It localises to the secreted. Its subcellular location is the extracellular space. Its function is as follows. Extracellular signal peptide that regulates cell fate. Represses root apical meristem maintenance. The chain is CLAVATA3/ESR (CLE)-related protein 22 from Arabidopsis thaliana (Mouse-ear cress).